Reading from the N-terminus, the 205-residue chain is Small ribosomal subunit protein uS4 (205 aa).

Residues 18–46 form a disordered region; it reads NIWGRPKSPVNRREYGPGQHGQRRKGKLS. Residues 94–157 form the S4 RNA-binding domain; sequence RRLDTVVYRS…KQLAIVLEAN (64 aa).

It belongs to the universal ribosomal protein uS4 family. In terms of assembly, part of the 30S ribosomal subunit. Contacts protein S5. The interaction surface between S4 and S5 is involved in control of translational fidelity.

Its function is as follows. One of the primary rRNA binding proteins, it binds directly to 16S rRNA where it nucleates assembly of the body of the 30S subunit. With S5 and S12 plays an important role in translational accuracy. This Rhodopseudomonas palustris (strain BisB5) protein is Small ribosomal subunit protein uS4.